A 952-amino-acid polypeptide reads, in one-letter code: Lysosomal alpha-glucosidase (952 aa).

Residues 1 to 27 (MRVRHPPCSRRLLAICALVSLATAALL) form the signal peptide. Residues 28 to 69 (GHILLHDFLLVPRELSGSSPVLEETHPAHQQGASRPGPRDAQ) constitute a propeptide that is removed on maturation. The segment at 47 to 80 (PVLEETHPAHQQGASRPGPRDAQAHLGRPRAVPT) is disordered. The P-type domain maps to 80-131 (TQCDVPPNSRFDCAPDKAITREQCDARGCCYIPAKQGLRGAQMGQPWCFFPP). 3 disulfides stabilise this stretch: cysteine 82-cysteine 109, cysteine 92-cysteine 108, and cysteine 103-cysteine 127. N-linked (GlcNAc...) asparagine glycans are attached at residues asparagine 140, asparagine 233, and asparagine 390. Aspartate 404 contacts substrate. N-linked (GlcNAc...) asparagine glycosylation occurs at asparagine 470. The active-site Nucleophile is aspartate 518. Glutamate 521 is an active-site residue. The cysteines at positions 533 and 558 are disulfide-linked. Arginine 600 and aspartate 616 together coordinate substrate. Cysteine 647 and cysteine 658 are disulfide-bonded. Asparagine 652 carries an N-linked (GlcNAc...) asparagine glycan. Histidine 674 is a binding site for substrate. N-linked (GlcNAc...) asparagine glycosylation is found at asparagine 882 and asparagine 925.

This sequence belongs to the glycosyl hydrolase 31 family.

It localises to the lysosome. It is found in the lysosome membrane. It catalyses the reaction Hydrolysis of terminal, non-reducing (1-&gt;4)-linked alpha-D-glucose residues with release of alpha-D-glucose.. Functionally, essential for the degradation of glycogen in lysosomes. Has highest activity on alpha-1,4-linked glycosidic linkages, but can also hydrolyze alpha-1,6-linked glucans. The chain is Lysosomal alpha-glucosidase (GAA) from Pongo abelii (Sumatran orangutan).